A 239-amino-acid polypeptide reads, in one-letter code: Probable transcriptional regulatory protein Bcer98_0465 (239 aa).

The protein belongs to the TACO1 family. YeeN subfamily.

The protein localises to the cytoplasm. In Bacillus cytotoxicus (strain DSM 22905 / CIP 110041 / 391-98 / NVH 391-98), this protein is Probable transcriptional regulatory protein Bcer98_0465.